The following is a 340-amino-acid chain: Anthranilate phosphoribosyltransferase (340 aa).

Residues G79, 82–83, S87, 89–92, 107–115, and S119 contribute to the 5-phospho-alpha-D-ribose 1-diphosphate site; these read GD, NIST, and KHGNRSVSS. G79 is a binding site for anthranilate. Residue S91 participates in Mg(2+) binding. N110 contacts anthranilate. R165 is a binding site for anthranilate. 2 residues coordinate Mg(2+): D224 and E225.

Belongs to the anthranilate phosphoribosyltransferase family. In terms of assembly, homodimer. It depends on Mg(2+) as a cofactor.

The enzyme catalyses N-(5-phospho-beta-D-ribosyl)anthranilate + diphosphate = 5-phospho-alpha-D-ribose 1-diphosphate + anthranilate. The protein operates within amino-acid biosynthesis; L-tryptophan biosynthesis; L-tryptophan from chorismate: step 2/5. Catalyzes the transfer of the phosphoribosyl group of 5-phosphorylribose-1-pyrophosphate (PRPP) to anthranilate to yield N-(5'-phosphoribosyl)-anthranilate (PRA). This is Anthranilate phosphoribosyltransferase from Oceanobacillus iheyensis (strain DSM 14371 / CIP 107618 / JCM 11309 / KCTC 3954 / HTE831).